The sequence spans 314 residues: 4-hydroxy-3-methylbut-2-enyl diphosphate reductase (314 aa).

Cysteine 12 contacts [4Fe-4S] cluster. (2E)-4-hydroxy-3-methylbut-2-enyl diphosphate contacts are provided by histidine 41 and histidine 74. Dimethylallyl diphosphate contacts are provided by histidine 41 and histidine 74. Isopentenyl diphosphate is bound by residues histidine 41 and histidine 74. Cysteine 96 contacts [4Fe-4S] cluster. Position 124 (histidine 124) interacts with (2E)-4-hydroxy-3-methylbut-2-enyl diphosphate. Histidine 124 serves as a coordination point for dimethylallyl diphosphate. An isopentenyl diphosphate-binding site is contributed by histidine 124. Glutamate 126 (proton donor) is an active-site residue. Position 167 (threonine 167) interacts with (2E)-4-hydroxy-3-methylbut-2-enyl diphosphate. A [4Fe-4S] cluster-binding site is contributed by cysteine 197. (2E)-4-hydroxy-3-methylbut-2-enyl diphosphate-binding residues include serine 225, serine 226, asparagine 227, and serine 269. Positions 225, 226, 227, and 269 each coordinate dimethylallyl diphosphate. 4 residues coordinate isopentenyl diphosphate: serine 225, serine 226, asparagine 227, and serine 269.

It belongs to the IspH family. It depends on [4Fe-4S] cluster as a cofactor.

It carries out the reaction isopentenyl diphosphate + 2 oxidized [2Fe-2S]-[ferredoxin] + H2O = (2E)-4-hydroxy-3-methylbut-2-enyl diphosphate + 2 reduced [2Fe-2S]-[ferredoxin] + 2 H(+). The enzyme catalyses dimethylallyl diphosphate + 2 oxidized [2Fe-2S]-[ferredoxin] + H2O = (2E)-4-hydroxy-3-methylbut-2-enyl diphosphate + 2 reduced [2Fe-2S]-[ferredoxin] + 2 H(+). Its pathway is isoprenoid biosynthesis; dimethylallyl diphosphate biosynthesis; dimethylallyl diphosphate from (2E)-4-hydroxy-3-methylbutenyl diphosphate: step 1/1. It participates in isoprenoid biosynthesis; isopentenyl diphosphate biosynthesis via DXP pathway; isopentenyl diphosphate from 1-deoxy-D-xylulose 5-phosphate: step 6/6. Functionally, catalyzes the conversion of 1-hydroxy-2-methyl-2-(E)-butenyl 4-diphosphate (HMBPP) into a mixture of isopentenyl diphosphate (IPP) and dimethylallyl diphosphate (DMAPP). Acts in the terminal step of the DOXP/MEP pathway for isoprenoid precursor biosynthesis. The sequence is that of 4-hydroxy-3-methylbut-2-enyl diphosphate reductase from Haemophilus influenzae (strain PittEE).